Reading from the N-terminus, the 425-residue chain is NAD kinase 2, mitochondrial (425 aa).

A mitochondrion-targeting transit peptide spans 1-45 (MDTSAIQQTLVKIYQRQAWQPPRKASKNETTVGKPRELAGGGSPA). Residues 20–46 (QPPRKASKNETTVGKPRELAGGGSPAD) form a disordered region. Residue K59 is modified to N6-acetyllysine; alternate. K59 bears the N6-succinyllysine; alternate mark. S171 carries the post-translational modification Phosphoserine. K285 carries the post-translational modification N6-succinyllysine. The residue at position 300 (K300) is an N6-acetyllysine; alternate. Position 300 is an N6-succinyllysine; alternate (K300). S350 carries the post-translational modification Phosphoserine. An N6-acetyllysine modification is found at K380.

Belongs to the NAD kinase family. As to quaternary structure, homodimer.

It localises to the mitochondrion. The enzyme catalyses NAD(+) + ATP = ADP + NADP(+) + H(+). With respect to regulation, inhibited by NADH, NADPH and NADP(+). Functionally, mitochondrial NAD(+) kinase that phosphorylates NAD(+) to yield NADP(+). Can use both ATP or inorganic polyphosphate as the phosphoryl donor. The polypeptide is NAD kinase 2, mitochondrial (Nadk2) (Rattus norvegicus (Rat)).